The sequence spans 105 residues: Large ribosomal subunit protein uL24 (105 aa).

It belongs to the universal ribosomal protein uL24 family. Part of the 50S ribosomal subunit.

Its function is as follows. One of two assembly initiator proteins, it binds directly to the 5'-end of the 23S rRNA, where it nucleates assembly of the 50S subunit. In terms of biological role, one of the proteins that surrounds the polypeptide exit tunnel on the outside of the subunit. The chain is Large ribosomal subunit protein uL24 from Lachnoclostridium phytofermentans (strain ATCC 700394 / DSM 18823 / ISDg) (Clostridium phytofermentans).